A 152-amino-acid chain; its full sequence is SsrA-binding protein (152 aa).

Positions 124–152 (KKLHDKRDTAAERDWQRDKARLMKGDRGD) are disordered. Residues 128–152 (DKRDTAAERDWQRDKARLMKGDRGD) are compositionally biased toward basic and acidic residues.

It belongs to the SmpB family.

Its subcellular location is the cytoplasm. Functionally, required for rescue of stalled ribosomes mediated by trans-translation. Binds to transfer-messenger RNA (tmRNA), required for stable association of tmRNA with ribosomes. tmRNA and SmpB together mimic tRNA shape, replacing the anticodon stem-loop with SmpB. tmRNA is encoded by the ssrA gene; the 2 termini fold to resemble tRNA(Ala) and it encodes a 'tag peptide', a short internal open reading frame. During trans-translation Ala-aminoacylated tmRNA acts like a tRNA, entering the A-site of stalled ribosomes, displacing the stalled mRNA. The ribosome then switches to translate the ORF on the tmRNA; the nascent peptide is terminated with the 'tag peptide' encoded by the tmRNA and targeted for degradation. The ribosome is freed to recommence translation, which seems to be the essential function of trans-translation. The polypeptide is SsrA-binding protein (Caulobacter vibrioides (strain ATCC 19089 / CIP 103742 / CB 15) (Caulobacter crescentus)).